The sequence spans 393 residues: NAD(P)H-quinone oxidoreductase subunit H, chloroplastic (393 aa).

This sequence belongs to the complex I 49 kDa subunit family. As to quaternary structure, NDH is composed of at least 16 different subunits, 5 of which are encoded in the nucleus.

The protein localises to the plastid. Its subcellular location is the chloroplast thylakoid membrane. It catalyses the reaction a plastoquinone + NADH + (n+1) H(+)(in) = a plastoquinol + NAD(+) + n H(+)(out). The catalysed reaction is a plastoquinone + NADPH + (n+1) H(+)(in) = a plastoquinol + NADP(+) + n H(+)(out). Its function is as follows. NDH shuttles electrons from NAD(P)H:plastoquinone, via FMN and iron-sulfur (Fe-S) centers, to quinones in the photosynthetic chain and possibly in a chloroplast respiratory chain. The immediate electron acceptor for the enzyme in this species is believed to be plastoquinone. Couples the redox reaction to proton translocation, and thus conserves the redox energy in a proton gradient. The chain is NAD(P)H-quinone oxidoreductase subunit H, chloroplastic from Nasturtium officinale (Watercress).